The chain runs to 423 residues: Structure-specific endonuclease subunit SLX1 (423 aa).

Positions 23-105 (AFYCCYLLRS…QNTKVSRHAD (83 aa)) constitute a GIY-YIG domain. Disordered regions lie at residues 300 to 334 (RRRR…DALQ) and 365 to 406 (AHRP…LGLQ).

This sequence belongs to the SLX1 family. Forms a heterodimer with SLX4. Requires a divalent metal cation as cofactor.

Its subcellular location is the nucleus. In terms of biological role, catalytic subunit of the SLX1-SLX4 structure-specific endonuclease that resolves DNA secondary structures generated during DNA repair and recombination. Has endonuclease activity towards branched DNA substrates, introducing single-strand cuts in duplex DNA close to junctions with ss-DNA. This is Structure-specific endonuclease subunit SLX1 from Paracoccidioides brasiliensis (strain Pb03).